The sequence spans 186 residues: Large ribosomal subunit protein uL22 (186 aa).

Residues 159–186 (KAAENEPAKKKLSKKKLQRQKEKMMRNE) are disordered. The segment covering 177-186 (RQKEKMMRNE) has biased composition (basic and acidic residues).

The protein belongs to the universal ribosomal protein uL22 family.

The polypeptide is Large ribosomal subunit protein uL22 (RpL17) (Aedes albopictus (Asian tiger mosquito)).